A 250-amino-acid chain; its full sequence is Silencing boundary-establishment protein FUB1 (250 aa).

Residues 179 to 250 (PDWSGGLPNP…GFGGSGSGFI (72 aa)) form a disordered region. Basic and acidic residues predominate over residues 202 to 213 (PNRRPAPRREDM). Positions 229–250 (PGSGGFGGSGSGGFGGSGSGFI) are enriched in gly residues.

Belongs to the proteasome inhibitor PI31 family. As to quaternary structure, interacts with the 20S proteasome.

Plays a role in the establishment of transcriptional silencing boundaries, preventing the propagation of heterochromatic silencing. The protein is Silencing boundary-establishment protein FUB1 of Saccharomyces cerevisiae (strain ATCC 204508 / S288c) (Baker's yeast).